Reading from the N-terminus, the 254-residue chain is Large ribosomal subunit protein uL15m (254 aa).

A mitochondrion-targeting transit peptide spans 1 to 78; the sequence is MFNILSRVCR…GSGQRRGRRI (78 aa). Residues 44–104 form a disordered region; it reads NYQSKKRVGR…KVGHSTGHLK (61 aa). Over residues 64–79 the composition is skewed to basic residues; sequence GRGHKGSGQRRGRRIK.

It belongs to the universal ribosomal protein uL15 family. In terms of assembly, component of the mitochondrial large ribosomal subunit (mt-LSU). Mature yeast 74S mitochondrial ribosomes consist of a small (37S) and a large (54S) subunit. The 37S small subunit contains a 15S ribosomal RNA (15S mt-rRNA) and at least 32 different proteins. The 54S large subunit contains a 21S rRNA (21S mt-rRNA) and at least 45 different proteins.

The protein localises to the mitochondrion. In terms of biological role, component of the mitochondrial ribosome (mitoribosome), a dedicated translation machinery responsible for the synthesis of mitochondrial genome-encoded proteins, including at least some of the essential transmembrane subunits of the mitochondrial respiratory chain. The mitoribosomes are attached to the mitochondrial inner membrane and translation products are cotranslationally integrated into the membrane. The polypeptide is Large ribosomal subunit protein uL15m (mrpl10) (Schizosaccharomyces pombe (strain 972 / ATCC 24843) (Fission yeast)).